The primary structure comprises 145 residues: 3-hydroxyacyl-[acyl-carrier-protein] dehydratase FabZ (145 aa).

His49 is an active-site residue.

It belongs to the thioester dehydratase family. FabZ subfamily.

It is found in the cytoplasm. The enzyme catalyses a (3R)-hydroxyacyl-[ACP] = a (2E)-enoyl-[ACP] + H2O. In terms of biological role, involved in unsaturated fatty acids biosynthesis. Catalyzes the dehydration of short chain beta-hydroxyacyl-ACPs and long chain saturated and unsaturated beta-hydroxyacyl-ACPs. The sequence is that of 3-hydroxyacyl-[acyl-carrier-protein] dehydratase FabZ from Rickettsia akari (strain Hartford).